The primary structure comprises 471 residues: Plant intracellular Ras-group-related LRR protein 2 (471 aa).

A coiled-coil region spans residues 106–133 (VVRLDEVHDSYEKKLKDTEEELSRVYST). 10 LRR repeats span residues 159-182 (GGTVERIDLSSQELKLIPEAFWKV), 183-205 (VGLVYLNLSGNDLTFIPDAISKL), 206-229 (KKLEELDVSSNSLESLPDSIGMLL), 231-251 (LRILNVNANNLTALPESIAHC), 253-275 (SLVELDASYNNLTSLPTNIGYGL), 276-298 (QNLERLSIQLNKLRYFPGSISEM), 300-321 (NLKYLDAHMNEIHGIPNSIGRL), 324-346 (LEVLNLSSNFNNLMGVPDTITDL), 347-369 (TNLRELDLSNNQIQAIPDSFYRL), and 371-392 (KLEKLNLDQNPLEIPSQEVATQ). The GVYW; degenerate signature appears at 393–405 (GAEVVREFMRKRW).

The protein belongs to the SHOC2 family. As to expression, widely expressed but preferentially in roots.

Its function is as follows. Leucine-rich repeat protein that likely mediates protein interactions, possibly in the context of signal transduction. The chain is Plant intracellular Ras-group-related LRR protein 2 (PIRL2) from Arabidopsis thaliana (Mouse-ear cress).